We begin with the raw amino-acid sequence, 836 residues long: Hypoxia-inducible factor 1-alpha (836 aa).

The segment at M1–R30 is disordered. The tract at residues M1–A401 is interaction with TSGA10. Residues E7–R30 show a composition bias toward basic and acidic residues. Residues R17–R70 form the bHLH domain. The DNA-binding stretch occupies residues K21–R30. The PAS 1 domain occupies S80–V155. The tract at residues R170 to V191 is required for heterodimer formation with ARNT. In terms of domain architecture, PAS 2 spans P228 to G298. A Phosphoserine; by CK1 modification is found at S247. The region spanning T302–I345 is the PAC domain. Residues S380–D417 are N-terminal VHL recognition site. Residue K391 forms a Glycyl lysine isopeptide (Lys-Gly) (interchain with G-Cter in SUMO) linkage. The ODD stretch occupies residues A401–Q613. Position 402 is a 4-hydroxyproline (P402). K476 participates in a covalent cross-link: Glycyl lysine isopeptide (Lys-Gly) (interchain with G-Cter in SUMO). The interval Q492–E511 is disordered. An NTAD region spans residues F544–R588. N6-acetyllysine; alternate is present on K545. Residues K545, K551, and K560 each participate in a glycyl lysine isopeptide (Lys-Gly) (interchain with G-Cter in ubiquitin) cross-link. K545 is covalently cross-linked (Glycyl lysine isopeptide (Lys-Gly) (interchain with G-Cter in ubiquitin); alternate). S564 carries the phosphoserine; by GSK3-beta modification. Position 568 is a phosphothreonine; by GSK3-beta (T568). Residues D569 to F585 are C-terminal VHL recognition site. P577 is modified (4-hydroxyproline). Position 589 is a phosphoserine; by PLK3 (S589). Residues S589–Q795 form an ID region. Disordered stretches follow at residues L593–G684 and Q707–H734. Position 602 is a phosphoserine; by GSK3-beta (S602). Polar residues predominate over residues T608–P620. A compositionally biased stretch (low complexity) spans T621–T632. A compositionally biased stretch (basic and acidic residues) spans D633–K647. The segment covering S652–A678 has biased composition (polar residues). S668 bears the Phosphoserine; by PLK3 mark. Position 719 is an N6-acetyllysine (K719). The short motif at R728–K731 is the Nuclear localization signal element. A CTAD region spans residues S796–N836. C810 bears the S-nitrosocysteine mark. N813 carries the post-translational modification (3S)-3-hydroxyasparagine.

In terms of assembly, interacts with the ARNT; forms a heterodimer that binds core DNA sequence 5'-TACGTG-3' within the hypoxia response element (HRE) of target gene promoters. Interacts with COPS5; the interaction increases the transcriptional activity of HIF1A through increased stability. Interacts with EP300 (via TAZ-type 1 domains); the interaction is stimulated in response to hypoxia and inhibited by CITED2. Interacts with CREBBP (via TAZ-type 1 domains). Interacts with NCOA1, NCOA2, APEX1 and HSP90. Interacts (hydroxylated within the ODD domain) with VHLL (via beta domain); the interaction, leads to polyubiquitination and subsequent HIF1A proteasomal degradation. During hypoxia, sumoylated HIF1A also binds VHL; the interaction promotes the ubiquitination of HIF1A. Interacts with SENP1; the interaction desumoylates HIF1A resulting in stabilization and activation of transcription. Interacts (via the ODD domain) with NAA10; the interaction appears not to acetylate HIF1A nor have any affect on protein stability, during hypoxia. Interacts with RWDD3; the interaction enhances HIF1A sumoylation. Interacts with TSGA10. Interacts with HIF3A. Interacts with RORA (via the DNA binding domain); the interaction enhances HIF1A transcription under hypoxia through increasing protein stability. Interaction with PSMA7 inhibits the transactivation activity of HIF1A under both normoxic and hypoxia-mimicking conditions. Interacts with USP20. Interacts with RACK1; promotes HIF1A ubiquitination and proteasome-mediated degradation. Interacts (via N-terminus) with USP19. Interacts with SIRT2. Interacts (deacetylated form) with EGLN1. Interacts with CBFA2T3. Interacts with HSP90AA1 and HSP90AB1. Interacts with DCUN1D1; this interaction increases the interaction between VHL and DCUN1D1. Interacts with HIF1AN. In terms of processing, S-nitrosylation of Cys-810 may be responsible for increased recruitment of p300 coactivator necessary for transcriptional activity of HIF-1 complex. Requires phosphorylation for DNA-binding. Phosphorylation at Ser-247 by CSNK1D/CK1 represses kinase activity and impairs ARNT binding. Phosphorylation by GSK3-beta and PLK3 promote degradation by the proteasome. Post-translationally, sumoylated; with SUMO1 under hypoxia. Sumoylation is enhanced through interaction with RWDD3. Both sumoylation and desumoylation seem to be involved in the regulation of its stability during hypoxia. Sumoylation can promote either its stabilization or its VHL-dependent degradation by promoting hydroxyproline-independent HIF1A-VHL complex binding, thus leading to HIF1A ubiquitination and proteasomal degradation. Desumoylation by SENP1 increases its stability amd transcriptional activity. There is a disaccord between various publications on the effect of sumoylation and desumoylation on its stability and transcriptional activity. In terms of processing, acetylation of Lys-545 by ARD1 increases interaction with VHL and stimulates subsequent proteasomal degradation. Deacetylation of Lys-719 by SIRT2 increases its interaction with and hydroxylation by EGLN1 thereby inactivating HIF1A activity by inducing its proteasomal degradation. Ubiquitinated; in normoxia, following hydroxylation and interaction with VHL. Lys-545 appears to be the principal site of ubiquitination. Clioquinol, the Cu/Zn-chelator, inhibits ubiquitination through preventing hydroxylation at Asn-813. Ubiquitinated by E3 ligase VHL. Deubiquitinated by UCHL1. Post-translationally, the iron and 2-oxoglutarate dependent 3-hydroxylation of asparagine is (S) stereospecific within HIF CTAD domains. In terms of processing, in normoxia, is hydroxylated on Pro-402 and Pro-577 in the oxygen-dependent degradation domain (ODD) by EGLN1/PHD2 and EGLN2/PHD1. EGLN3/PHD3 has also been shown to hydroxylate Pro-577. The hydroxylated prolines promote interaction with VHL, initiating rapid ubiquitination and subsequent proteasomal degradation. Deubiquitinated by USP20. Under hypoxia, proline hydroxylation is impaired and ubiquitination is attenuated, resulting in stabilization. In normoxia, is hydroxylated on Asn-813 by HIF1AN, thus abrogating interaction with CREBBP and EP300 and preventing transcriptional activation. Repressed by iron ion, via Fe(2+) prolyl hydroxylase (PHD) enzymes-mediated hydroxylation and subsequent proteasomal degradation. In terms of tissue distribution, ubiquitous.

The protein resides in the cytoplasm. Its subcellular location is the nucleus. It is found in the nucleus speckle. With respect to regulation, induced by reactive oxygen species (ROS). Functionally, functions as a master transcriptional regulator of the adaptive response to hypoxia. Under hypoxic conditions, activates the transcription of over 40 genes, including erythropoietin, glucose transporters, glycolytic enzymes, vascular endothelial growth factor, HILPDA, and other genes whose protein products increase oxygen delivery or facilitate metabolic adaptation to hypoxia. Plays an essential role in embryonic vascularization, tumor angiogenesis and pathophysiology of ischemic disease. Heterodimerizes with ARNT; heterodimer binds to core DNA sequence 5'-TACGTG-3' within the hypoxia response element (HRE) of target gene promoters. Activation requires recruitment of transcriptional coactivators such as CREBBP and EP300. Activity is enhanced by interaction with NCOA1 and/or NCOA2. Interaction with redox regulatory protein APEX1 seems to activate CTAD and potentiates activation by NCOA1 and CREBBP. Involved in the axonal distribution and transport of mitochondria in neurons during hypoxia. The sequence is that of Hypoxia-inducible factor 1-alpha (Hif1a) from Mus musculus (Mouse).